The primary structure comprises 316 residues: Ribosomal RNA small subunit methyltransferase H (316 aa).

Residues 37–39 (GGH), aspartate 56, phenylalanine 83, aspartate 106, and histidine 113 each bind S-adenosyl-L-methionine. The disordered stretch occupies residues 276–316 (PILPSEEETKENPASRSAKLRVLRKTKSADKKYKKENSKEE). Residues 302-316 (KSADKKYKKENSKEE) show a composition bias toward basic and acidic residues.

Belongs to the methyltransferase superfamily. RsmH family.

Its subcellular location is the cytoplasm. It catalyses the reaction cytidine(1402) in 16S rRNA + S-adenosyl-L-methionine = N(4)-methylcytidine(1402) in 16S rRNA + S-adenosyl-L-homocysteine + H(+). Its function is as follows. Specifically methylates the N4 position of cytidine in position 1402 (C1402) of 16S rRNA. The polypeptide is Ribosomal RNA small subunit methyltransferase H (Leptospira borgpetersenii serovar Hardjo-bovis (strain JB197)).